The chain runs to 122 residues: Large ribosomal subunit protein uL22c (122 aa).

It belongs to the universal ribosomal protein uL22 family. In terms of assembly, part of the 50S ribosomal subunit.

The protein resides in the plastid. The protein localises to the chloroplast. Functionally, this protein binds specifically to 23S rRNA. Its function is as follows. The globular domain of the protein is located near the polypeptide exit tunnel on the outside of the subunit, while an extended beta-hairpin is found that lines the wall of the exit tunnel in the center of the 70S ribosome. This Adiantum capillus-veneris (Maidenhair fern) protein is Large ribosomal subunit protein uL22c (rpl22).